Here is a 177-residue protein sequence, read N- to C-terminus: MAEFATIARPYAKALFGLAQEKNQIESWLGGLEKLAAVVQEGKVASLIDRPETNASEKADILIDLVGLKDKELKNFVIVLAGQKRLSILPEVYAQYQDLTLSFNHIKSAVIYSAYPLTDKQVGELAQMLNKRFDSELKISVEIEPELIGGIKVEVGDQVLDLSVQGKLSALYTTMTN.

The protein belongs to the ATPase delta chain family. As to quaternary structure, F-type ATPases have 2 components, F(1) - the catalytic core - and F(0) - the membrane proton channel. F(1) has five subunits: alpha(3), beta(3), gamma(1), delta(1), epsilon(1). F(0) has three main subunits: a(1), b(2) and c(10-14). The alpha and beta chains form an alternating ring which encloses part of the gamma chain. F(1) is attached to F(0) by a central stalk formed by the gamma and epsilon chains, while a peripheral stalk is formed by the delta and b chains.

The protein localises to the cell inner membrane. In terms of biological role, f(1)F(0) ATP synthase produces ATP from ADP in the presence of a proton or sodium gradient. F-type ATPases consist of two structural domains, F(1) containing the extramembraneous catalytic core and F(0) containing the membrane proton channel, linked together by a central stalk and a peripheral stalk. During catalysis, ATP synthesis in the catalytic domain of F(1) is coupled via a rotary mechanism of the central stalk subunits to proton translocation. Its function is as follows. This protein is part of the stalk that links CF(0) to CF(1). It either transmits conformational changes from CF(0) to CF(1) or is implicated in proton conduction. The polypeptide is ATP synthase subunit delta (Neisseria gonorrhoeae (strain ATCC 700825 / FA 1090)).